The sequence spans 248 residues: Ankyrin repeat domain-containing protein 45 (248 aa).

Acidic residues-rich tracts occupy residues Met-1–Glu-10 and Glu-22–Gly-33. The segment at Met-1–Thr-42 is disordered. ANK repeat units lie at residues Val-75–Glu-104 and Arg-108–Ala-137.

It is found in the cytoplasm. The protein localises to the midbody. The protein resides in the midbody ring. Its subcellular location is the cleavage furrow. Functionally, may play a role during cell division. The chain is Ankyrin repeat domain-containing protein 45 (Ankrd45) from Mus musculus (Mouse).